The following is a 246-amino-acid chain: Probable chemoreceptor glutamine deamidase CheD (246 aa).

The segment at 225–246 (GAGVQPAVQKAASPYAANLSRK) is disordered.

This sequence belongs to the CheD family.

It catalyses the reaction L-glutaminyl-[protein] + H2O = L-glutamyl-[protein] + NH4(+). In terms of biological role, probably deamidates glutamine residues to glutamate on methyl-accepting chemotaxis receptors (MCPs), playing an important role in chemotaxis. This is Probable chemoreceptor glutamine deamidase CheD from Burkholderia vietnamiensis (strain G4 / LMG 22486) (Burkholderia cepacia (strain R1808)).